Here is a 79-residue protein sequence, read N- to C-terminus: UPF0401 protein YkfF (79 aa).

This sequence belongs to the UPF0401 family.

The protein is UPF0401 protein YkfF (ykfF) of Escherichia coli (strain K12).